The chain runs to 466 residues: Adenosylhomocysteinase (466 aa).

Substrate contacts are provided by Thr-57, Asp-132, and Glu-192. 193–195 (TTT) serves as a coordination point for NAD(+). The substrate site is built by Lys-222 and Asp-226. NAD(+) is bound by residues Asn-227, 256-261 (GYGDVG), Glu-279, Asn-314, 335-337 (IGH), and Asn-380.

It belongs to the adenosylhomocysteinase family. It depends on NAD(+) as a cofactor.

The protein localises to the cytoplasm. It carries out the reaction S-adenosyl-L-homocysteine + H2O = L-homocysteine + adenosine. It functions in the pathway amino-acid biosynthesis; L-homocysteine biosynthesis; L-homocysteine from S-adenosyl-L-homocysteine: step 1/1. In terms of biological role, may play a key role in the regulation of the intracellular concentration of adenosylhomocysteine. In Rhizobium etli (strain CIAT 652), this protein is Adenosylhomocysteinase.